We begin with the raw amino-acid sequence, 249 residues long: Probable transcriptional regulatory protein Rru_A1086 (249 aa).

The protein belongs to the TACO1 family.

The protein localises to the cytoplasm. This chain is Probable transcriptional regulatory protein Rru_A1086, found in Rhodospirillum rubrum (strain ATCC 11170 / ATH 1.1.1 / DSM 467 / LMG 4362 / NCIMB 8255 / S1).